The chain runs to 290 residues: Outer dense fiber protein 4 (290 aa).

At Ser28 the chain carries Phosphoserine. The next 4 membrane-spanning stretches (helical) occupy residues 44-64, 132-152, 164-184, and 201-221; these read AQVV…LMVF, ISFI…HLPY, LIGI…LLLF, and IGWS…CGIL. Residues 262 to 290 are disordered; sequence ADILDPTQDDQKPLSSDNIALPPNPDTTD.

The protein resides in the membrane. In terms of biological role, component of the outer dense fibers (ODF) of spermatozoa which could be involved in sperm tail structure, sperm movement and general organization of cellular cytoskeleton. The polypeptide is Outer dense fiber protein 4 (Odf4) (Rattus norvegicus (Rat)).